Consider the following 284-residue polypeptide: CUE domain-containing protein 2 (284 aa).

Residues 141–184 (EELPGVDVLLEVFPTCSMEQAQWVLAKARGDLEEAVHMLVEGKE) form the CUE domain. Positions 183–204 (KEEGPPGWDGPSQDLPRRLRGP) are disordered.

It belongs to the CUEDC2 family. Interacts with PGR and ESR1.

The protein localises to the cytoplasm. It localises to the nucleus. In terms of biological role, controls PGR and ESR1 protein levels through their targeting for ubiquitination and subsequent proteasomal degradation. The chain is CUE domain-containing protein 2 (Cuedc2) from Mus musculus (Mouse).